A 155-amino-acid chain; its full sequence is Small ribosomal subunit protein uS7c (155 aa).

It belongs to the universal ribosomal protein uS7 family. Part of the 30S ribosomal subunit.

The protein resides in the plastid. Its subcellular location is the chloroplast. In terms of biological role, one of the primary rRNA binding proteins, it binds directly to 16S rRNA where it nucleates assembly of the head domain of the 30S subunit. This chain is Small ribosomal subunit protein uS7c (rps7), found in Stewartia pseudocamellia (Japanese stewartia).